The sequence spans 252 residues: N-acetylglucosaminyl-phosphatidylinositol de-N-acetylase (252 aa).

The chain crosses the membrane as a helical span at residues Glu-2 to Trp-22. Residues Asn-23–Leu-252 are Cytoplasmic-facing.

Belongs to the PIGL family.

It is found in the endoplasmic reticulum membrane. The catalysed reaction is a 6-(N-acetyl-alpha-D-glucosaminyl)-1-(1,2-diacyl-sn-glycero-3-phospho)-1D-myo-inositol + H2O = a 6-(alpha-D-glucosaminyl)-1-(1,2-diacyl-sn-glycero-3-phospho)-1D-myo-inositol + acetate. It participates in glycolipid biosynthesis; glycosylphosphatidylinositol-anchor biosynthesis. Its function is as follows. Catalyzes the second step of glycosylphosphatidylinositol (GPI) biosynthesis, which is the de-N-acetylation of N-acetylglucosaminyl-phosphatidylinositol. The chain is N-acetylglucosaminyl-phosphatidylinositol de-N-acetylase (Pigl) from Rattus norvegicus (Rat).